Reading from the N-terminus, the 173-residue chain is RNA 2',3'-cyclic phosphodiesterase (173 aa).

Catalysis depends on histidine 38, which acts as the Proton donor. 2 consecutive short sequence motifs (HXTX) follow at residues 38-41 (HITV) and 118-121 (HLTI). Catalysis depends on histidine 118, which acts as the Proton acceptor.

It belongs to the 2H phosphoesterase superfamily. ThpR family.

The catalysed reaction is a 3'-end 2',3'-cyclophospho-ribonucleotide-RNA + H2O = a 3'-end 2'-phospho-ribonucleotide-RNA + H(+). Its function is as follows. Hydrolyzes RNA 2',3'-cyclic phosphodiester to an RNA 2'-phosphomonoester. The sequence is that of RNA 2',3'-cyclic phosphodiesterase from Methanocaldococcus jannaschii (strain ATCC 43067 / DSM 2661 / JAL-1 / JCM 10045 / NBRC 100440) (Methanococcus jannaschii).